A 492-amino-acid chain; its full sequence is UDP-N-acetylmuramoyl-L-alanyl-D-glutamate--2,6-diaminopimelate ligase (492 aa).

Ser-21 serves as a coordination point for UDP-N-acetyl-alpha-D-muramoyl-L-alanyl-D-glutamate. 98-104 (GTNGKSS) serves as a coordination point for ATP. UDP-N-acetyl-alpha-D-muramoyl-L-alanyl-D-glutamate-binding positions include 144 to 145 (TT), Ser-171, Gln-177, and Arg-179. Lys-211 is subject to N6-carboxylysine. Meso-2,6-diaminopimelate contacts are provided by residues Arg-372, 396–399 (DNPR), Gly-446, and Glu-450. Positions 396-399 (DNPR) match the Meso-diaminopimelate recognition motif motif.

The protein belongs to the MurCDEF family. MurE subfamily. It depends on Mg(2+) as a cofactor. Post-translationally, carboxylation is probably crucial for Mg(2+) binding and, consequently, for the gamma-phosphate positioning of ATP.

The protein resides in the cytoplasm. It catalyses the reaction UDP-N-acetyl-alpha-D-muramoyl-L-alanyl-D-glutamate + meso-2,6-diaminopimelate + ATP = UDP-N-acetyl-alpha-D-muramoyl-L-alanyl-gamma-D-glutamyl-meso-2,6-diaminopimelate + ADP + phosphate + H(+). Its pathway is cell wall biogenesis; peptidoglycan biosynthesis. Functionally, catalyzes the addition of meso-diaminopimelic acid to the nucleotide precursor UDP-N-acetylmuramoyl-L-alanyl-D-glutamate (UMAG) in the biosynthesis of bacterial cell-wall peptidoglycan. This chain is UDP-N-acetylmuramoyl-L-alanyl-D-glutamate--2,6-diaminopimelate ligase, found in Rickettsia typhi (strain ATCC VR-144 / Wilmington).